The sequence spans 1024 residues: Beta-galactosidase (1024 aa).

Substrate-binding residues include N103 and D202. A Na(+)-binding site is contributed by D202. Mg(2+) is bound by residues E417, H419, and E462. Residues E462 and 538 to 541 contribute to the substrate site; that span reads EYAH. The active-site Proton donor is the E462. E538 (nucleophile) is an active-site residue. Mg(2+) is bound at residue N598. Na(+) is bound by residues F602 and N605. Substrate is bound by residues N605 and W1000.

Belongs to the glycosyl hydrolase 2 family. In terms of assembly, homotetramer. Requires Mg(2+) as cofactor. It depends on Na(+) as a cofactor.

The enzyme catalyses Hydrolysis of terminal non-reducing beta-D-galactose residues in beta-D-galactosides.. The sequence is that of Beta-galactosidase from Escherichia coli O17:K52:H18 (strain UMN026 / ExPEC).